The following is a 485-amino-acid chain: Aldehyde dehydrogenase family 3 member A2 (485 aa).

Topologically, residues 1–463 (MELEVRRVRQ…FLLKRFNKEK (463 aa)) are cytoplasmic. 185–190 (GNTAVG) is a binding site for NAD(+). Residues E207 and C241 contribute to the active site. S293 is modified (phosphoserine). Residues 464–484 (LGLLLLTFLGIVAAVLVKAEY) form a helical membrane-spanning segment. The Prevents secretion from ER motif lies at 481-484 (KAEY).

Belongs to the aldehyde dehydrogenase family. In terms of assembly, homodimer.

The protein resides in the microsome membrane. It localises to the endoplasmic reticulum membrane. The enzyme catalyses an aldehyde + NAD(+) + H2O = a carboxylate + NADH + 2 H(+). The catalysed reaction is a fatty aldehyde + NAD(+) + H2O = a fatty acid + NADH + 2 H(+). It carries out the reaction (2E)-hexadecenal + NAD(+) + H2O = (E)-hexadec-2-enoate + NADH + 2 H(+). It catalyses the reaction hexadecanoate + NADH + 2 H(+) = hexadecanal + NAD(+) + H2O. The enzyme catalyses 22-oxodocosanoate + NAD(+) + H2O = docosanedioate + NADH + 2 H(+). The catalysed reaction is 2,6,10,14-tetramethylpentadecanal + NAD(+) + H2O = 2,6,10,14-tetramethylpentadecanoate + NADH + 2 H(+). It carries out the reaction octadecanal + NAD(+) + H2O = octadecanoate + NADH + 2 H(+). It catalyses the reaction dodecanoate + NADH + 2 H(+) = dodecanal + NAD(+) + H2O. The enzyme catalyses decanal + NAD(+) + H2O = decanoate + NADH + 2 H(+). The catalysed reaction is tetradecanal + NAD(+) + H2O = tetradecanoate + NADH + 2 H(+). It carries out the reaction octanal + NAD(+) + H2O = octanoate + NADH + 2 H(+). It catalyses the reaction heptanal + NAD(+) + H2O = heptanoate + NADH + 2 H(+). The enzyme catalyses (2E,6E)-farnesal + NAD(+) + H2O = (2E,6E)-farnesoate + NADH + 2 H(+). Its function is as follows. Catalyzes the oxidation of medium and long-chain aliphatic aldehydes to fatty acids. Active on a variety of saturated and unsaturated aliphatic aldehydes between 6 and 24 carbons in length. Responsible for conversion of the sphingosine 1-phosphate (S1P) degradation product hexadecenal to hexadecenoic acid. This Pongo abelii (Sumatran orangutan) protein is Aldehyde dehydrogenase family 3 member A2 (ALDH3A2).